Reading from the N-terminus, the 345-residue chain is Biotin synthase (345 aa).

Residues N39–R266 form the Radical SAM core domain. C54, C58, and C61 together coordinate [4Fe-4S] cluster. Residues C98, C129, C189, and R261 each coordinate [2Fe-2S] cluster.

It belongs to the radical SAM superfamily. Biotin synthase family. As to quaternary structure, homodimer. It depends on [4Fe-4S] cluster as a cofactor. [2Fe-2S] cluster serves as cofactor.

It catalyses the reaction (4R,5S)-dethiobiotin + (sulfur carrier)-SH + 2 reduced [2Fe-2S]-[ferredoxin] + 2 S-adenosyl-L-methionine = (sulfur carrier)-H + biotin + 2 5'-deoxyadenosine + 2 L-methionine + 2 oxidized [2Fe-2S]-[ferredoxin]. It participates in cofactor biosynthesis; biotin biosynthesis; biotin from 7,8-diaminononanoate: step 2/2. Catalyzes the conversion of dethiobiotin (DTB) to biotin by the insertion of a sulfur atom into dethiobiotin via a radical-based mechanism. The chain is Biotin synthase from Idiomarina loihiensis (strain ATCC BAA-735 / DSM 15497 / L2-TR).